A 300-amino-acid polypeptide reads, in one-letter code: 2-oxoglutarate-dependent dioxygenase DAO (300 aa).

A Fe2OG dioxygenase domain is found at 149–252 (WPCQFRMNRY…VSIAMFLLAP (104 aa)). The Fe cation site is built by His173, Asp175, and His232. Arg242 is a 2-oxoglutarate binding site.

This sequence belongs to the iron/ascorbate-dependent oxidoreductase family. The cofactor is Fe(2+).

In terms of biological role, 2-oxoglutarate-dependent dioxygenase essential for auxin catabolism and maintenance of auxin homeostasis in reproductive organs. Catalyzes the irreversible oxidation of indole-3-acetic acid (IAA) to the biologically inactive 2-oxoindole-3-acetic acid (OxIAA). The sequence is that of 2-oxoglutarate-dependent dioxygenase DAO (DAO) from Oryza sativa subsp. indica (Rice).